Consider the following 210-residue polypeptide: Protein HEADING DATE REPRESSOR 1 (210 aa).

Residues 1 to 97 (MEEPASADPP…GKRSSAEMLL (97 aa)) are disordered. A coiled-coil region spans residues 29–49 (QQELNKEAADEQLNNQAHEEA). Basic and acidic residues-rich tracts occupy residues 45-54 (AHEEAMKIDD) and 62-79 (DDVH…RKAL). Residues 129–184 (RRIAIQEMNRKDREINGLNEQLEEDSRVLELLQKQLADERKKRTEIEKENSMLHEQ) are a coiled coil.

As to quaternary structure, interacts with OSK3 and OSK4. As to expression, mostly expressed in leaves, seedlings and floral organs, and, to a lower extent, in panicle, roots, nodes, internodes, leaf joint and sheath.

The protein resides in the nucleus. Regulates flowering time via a photoperiod-dependent pathway. Suppressor of flowering that upregulates HD1 and down-regulates EHD1 in long days (LD), thus leading to the down-regulation of HD3A and RFT1. Triggers OSK4-mediated HD1 phosphorylation. In Oryza sativa subsp. japonica (Rice), this protein is Protein HEADING DATE REPRESSOR 1.